Consider the following 212-residue polypeptide: Pyridoxine/pyridoxamine 5'-phosphate oxidase (212 aa).

Residues 59–64 (RMVLMK), 74–75 (YS), K81, and Q103 contribute to the FMN site. K64 lines the substrate pocket. Y121 and R125 together coordinate substrate. FMN is bound by residues 138–139 (QS) and W183. 189–191 (RLH) is a substrate binding site. R193 is a binding site for FMN.

This sequence belongs to the pyridoxamine 5'-phosphate oxidase family. Homodimer. It depends on FMN as a cofactor.

It carries out the reaction pyridoxamine 5'-phosphate + O2 + H2O = pyridoxal 5'-phosphate + H2O2 + NH4(+). The catalysed reaction is pyridoxine 5'-phosphate + O2 = pyridoxal 5'-phosphate + H2O2. Its pathway is cofactor metabolism; pyridoxal 5'-phosphate salvage; pyridoxal 5'-phosphate from pyridoxamine 5'-phosphate: step 1/1. The protein operates within cofactor metabolism; pyridoxal 5'-phosphate salvage; pyridoxal 5'-phosphate from pyridoxine 5'-phosphate: step 1/1. Functionally, catalyzes the oxidation of either pyridoxine 5'-phosphate (PNP) or pyridoxamine 5'-phosphate (PMP) into pyridoxal 5'-phosphate (PLP). The sequence is that of Pyridoxine/pyridoxamine 5'-phosphate oxidase from Rhodopseudomonas palustris (strain BisB5).